The chain runs to 141 residues: MQLTSFTDYALRTLIYLASLPDNEQTNITDVTELFGVSRNHMVKVINRLGQLNYIQTVRGKNGGIRLNRPAKTILVGEVVRDLEPLDLVNCSVEFCHITPACRLKERLYRAKLAFLAELDDCSIAELLDDNAELLILLQKA.

The 128-residue stretch at 2 to 129 (QLTSFTDYAL…DDCSIAELLD (128 aa)) folds into the HTH rrf2-type domain. Residues 28–51 (ITDVTELFGVSRNHMVKVINRLGQ) constitute a DNA-binding region (H-T-H motif). Residues Cys91, Cys96, and Cys102 each contribute to the [2Fe-2S] cluster site.

Requires [2Fe-2S] cluster as cofactor.

In terms of biological role, nitric oxide-sensitive repressor of genes involved in protecting the cell against nitrosative stress. May require iron for activity. The chain is HTH-type transcriptional repressor NsrR from Vibrio vulnificus (strain CMCP6).